The sequence spans 247 residues: Aliphatic sulfonates import ATP-binding protein SsuB 1 (247 aa).

One can recognise an ABC transporter domain in the interval 7-222 (LSLSGVHKSF…KRSSYEFVET (216 aa)). 39–46 (GKSGCGKS) contacts ATP.

The protein belongs to the ABC transporter superfamily. Aliphatic sulfonates importer (TC 3.A.1.17.2) family. The complex is composed of two ATP-binding proteins (SsuB), two transmembrane proteins (SsuC) and a solute-binding protein (SsuA).

The protein resides in the cell membrane. It catalyses the reaction ATP + H2O + aliphatic sulfonate-[sulfonate-binding protein]Side 1 = ADP + phosphate + aliphatic sulfonateSide 2 + [sulfonate-binding protein]Side 1.. Its function is as follows. Part of the ABC transporter complex SsuABC involved in aliphatic sulfonates import. Responsible for energy coupling to the transport system. This chain is Aliphatic sulfonates import ATP-binding protein SsuB 1, found in Shouchella clausii (strain KSM-K16) (Alkalihalobacillus clausii).